Here is a 219-residue protein sequence, read N- to C-terminus: 7-cyano-7-deazaguanine synthase (219 aa).

10 to 20 (FSGGQDSTTCL) lines the ATP pocket. Cys-188, Cys-197, Cys-200, and Cys-203 together coordinate Zn(2+).

It belongs to the QueC family. Requires Zn(2+) as cofactor.

The enzyme catalyses 7-carboxy-7-deazaguanine + NH4(+) + ATP = 7-cyano-7-deazaguanine + ADP + phosphate + H2O + H(+). It functions in the pathway purine metabolism; 7-cyano-7-deazaguanine biosynthesis. Functionally, catalyzes the ATP-dependent conversion of 7-carboxy-7-deazaguanine (CDG) to 7-cyano-7-deazaguanine (preQ(0)). The protein is 7-cyano-7-deazaguanine synthase of Bacteroides fragilis (strain ATCC 25285 / DSM 2151 / CCUG 4856 / JCM 11019 / LMG 10263 / NCTC 9343 / Onslow / VPI 2553 / EN-2).